The chain runs to 107 residues: U1-lycotoxin-Ls1b (107 aa).

The first 20 residues, 1 to 20 (MMKVLVVVALLVTLISYSSS), serve as a signal peptide directing secretion. Residues 21–41 (EGIDDLEADELSSLMANEQTR) constitute a propeptide that is removed on maturation. 4 disulfides stabilise this stretch: Cys-44–Cys-59, Cys-51–Cys-68, Cys-58–Cys-86, and Cys-70–Cys-84.

It belongs to the neurotoxin 19 (CSTX) family. 04 (U1-Lctx) subfamily. Expressed by the venom gland.

It localises to the secreted. The sequence is that of U1-lycotoxin-Ls1b from Lycosa singoriensis (Wolf spider).